We begin with the raw amino-acid sequence, 83 residues long: Evasin P1124 (83 aa).

Positions 1–28 (MAVNVFTILQLAVFAAIVLNVNLHSVSA) are cleaved as a signal peptide. 3 cysteine pairs are disulfide-bonded: C48/C66, C52/C68, and C62/C79. Residue N51 is glycosylated (N-linked (GlcNAc...) asparagine).

The protein localises to the secreted. In terms of biological role, salivary chemokine-binding protein which binds to host chemokines CXCL1, CXCL2, CXCL3, CXCL5, CXCL6, CXCL12 and CXCL13. The protein is Evasin P1124 of Ixodes ricinus (Common tick).